The chain runs to 41 residues: Large ribosomal subunit protein bL36 (41 aa).

Belongs to the bacterial ribosomal protein bL36 family.

This chain is Large ribosomal subunit protein bL36, found in Granulibacter bethesdensis (strain ATCC BAA-1260 / CGDNIH1).